Reading from the N-terminus, the 290-residue chain is Elongation factor Ts (290 aa).

The segment at 82-85 is involved in Mg(2+) ion dislocation from EF-Tu; it reads TDFV.

This sequence belongs to the EF-Ts family.

It localises to the cytoplasm. Its function is as follows. Associates with the EF-Tu.GDP complex and induces the exchange of GDP to GTP. It remains bound to the aminoacyl-tRNA.EF-Tu.GTP complex up to the GTP hydrolysis stage on the ribosome. The chain is Elongation factor Ts from Cellvibrio japonicus (strain Ueda107) (Pseudomonas fluorescens subsp. cellulosa).